The primary structure comprises 358 residues: MININDRALIKKAIDKINKLAEKIDKLKIMHVCGSHEHTICKYGIRDVLPENITVVPGPGCPVCVTTQKEIDTAIYLADNGYVITTLGDMYRVPGSEKSLMEKQSEGCDVRIVYSISEAVKMAKKERDKKFVFVAIGFETTAPTTGAELISLKNKDVNNFFILNCHRQTPPVMEFLLNEGVYLDAFICPGHVSTITGLKPYYGLCEKYKAPMVVAGFEPIDVLMAIIMILKQVISGEAKVENEYIRAVKPEGNVLAQKIINEVFESIDVPWRGFPVVKNGGFGLREKYKKFDIYEHEDIPEIKEKIPKGCICDKILRGEKLPTDCPLFGTVCTPLNPVGSCMVSDEGTCRIFYKYRRI.

3 residues coordinate Fe cation: C33, C61, and C64.

Belongs to the HypD family.

This Methanocaldococcus jannaschii (strain ATCC 43067 / DSM 2661 / JAL-1 / JCM 10045 / NBRC 100440) (Methanococcus jannaschii) protein is Putative hydrogenase expression/formation protein MJ0993.